Reading from the N-terminus, the 247-residue chain is Oocyte zinc finger protein XlCOF20 (247 aa).

8 consecutive C2H2-type zinc fingers follow at residues Y6–H28, F34–H56, F62–H84, F90–H112, F118–H140, F146–H168, F174–C196, and Q225–H247.

Belongs to the krueppel C2H2-type zinc-finger protein family.

The protein localises to the nucleus. In terms of biological role, may be involved in transcriptional regulation. This Xenopus laevis (African clawed frog) protein is Oocyte zinc finger protein XlCOF20.